The chain runs to 131 residues: Putative pre-16S rRNA nuclease (131 aa).

Belongs to the YqgF nuclease family.

The protein resides in the cytoplasm. Its function is as follows. Could be a nuclease involved in processing of the 5'-end of pre-16S rRNA. This is Putative pre-16S rRNA nuclease from Bordetella avium (strain 197N).